A 94-amino-acid polypeptide reads, in one-letter code: Lipolysis-activating peptide 1-beta chain (94 aa).

The N-terminal stretch at 1 to 19 (MKILAVVLISVIVLNTANG) is a signal peptide. Residues 20-87 (ENYYPQKYTN…YFNALESQCP (68 aa)) enclose the LCN-type CS-alpha/beta domain. 3 cysteine pairs are disulfide-bonded: cysteine 34/cysteine 56, cysteine 42/cysteine 66, and cysteine 46/cysteine 68.

It belongs to the long (3 C-C) scorpion toxin superfamily. In terms of assembly, homodimer; disulfide-linked or monomer (edited version) or heterodimer of an alpha chain (AC P0CI44 or AC P0CI45) and this beta chain (non-edited version). In terms of tissue distribution, expressed by the venom gland.

It is found in the secreted. In terms of biological role, the homodimer inhibits HMG-CoA reductase (HMGCR) (32% of inhibition produced by 0.6 uM), a glycoprotein involved in the control of cholesterol biosynthesis. The inhibitory effects of bumarsin are seen at much lower concentrations (0.6 uM) than that for statins such as atorvastatin (5 mM) and simvastatin (10 uM). In addition to inhibition of HMG-CoA reductase, this protein lowers cholesterol levels by inducing steroid hormone synthesis via StAR, and by increasing reverse cholesterol transport mediated by the induction of ABCA1 and APOA1. Functionally, the heterodimer non-edited LVP1 induces lipolysis in rat adipocytes. Induction of lipolysis by LVP1 appears to be mediated through the beta-2 adrenergic receptor pathway (ADRB2). The monomer edited version, similar to alpha-toxins, may modulate voltage-gated sodium channels (Nav) and may block voltage-gated potassium channels (Kv). The polypeptide is Lipolysis-activating peptide 1-beta chain (Lychas mucronatus (Chinese swimming scorpion)).